Reading from the N-terminus, the 233-residue chain is Isoprenyl transferase (233 aa).

Asp-12 is an active-site residue. Position 12 (Asp-12) interacts with Mg(2+). Residues 13 to 16, Trp-17, Arg-25, His-29, and 57 to 59 each bind substrate; these read GNGR and STE. The Proton acceptor role is filled by Asn-60. Substrate is bound by residues Trp-61, Arg-63, Arg-178, and 184–186; that span reads RLS. Glu-197 contacts Mg(2+).

It belongs to the UPP synthase family. As to quaternary structure, homodimer. Mg(2+) serves as cofactor.

Catalyzes the condensation of isopentenyl diphosphate (IPP) with allylic pyrophosphates generating different type of terpenoids. The protein is Isoprenyl transferase of Thermotoga maritima (strain ATCC 43589 / DSM 3109 / JCM 10099 / NBRC 100826 / MSB8).